Here is a 206-residue protein sequence, read N- to C-terminus: MATSHEDGSATHPNYYYYVDPSLPVYESQQPNPVDDLITIYGLEEVARQVARTNADGTKAVKLRKSYKNQIQDLSGRFITIPSRENGKGGEISDVIFQNNPDMMNQAKLVEGMSEEEYRDAMMKRDTGLFEPPQMDWDMCSTVIGQLMKSHPSEFKNSGFDVDDLAFDLNGTGTKTKKRKYKSNGSSMASPNTELQPDDMKRRRLE.

Residues 171–206 (GTGTKTKKRKYKSNGSSMASPNTELQPDDMKRRRLE) form a disordered region. A compositionally biased stretch (polar residues) spans 183–195 (SNGSSMASPNTEL).

This sequence belongs to the Mediator complex subunit 19 family. As to quaternary structure, component of the Mediator complex.

It is found in the nucleus. Functionally, component of the Mediator complex, a coactivator involved in the regulated transcription of nearly all RNA polymerase II-dependent genes. Mediator functions as a bridge to convey information from gene-specific regulatory proteins to the basal RNA polymerase II transcription machinery. Mediator is recruited to promoters by direct interactions with regulatory proteins and serves as a scaffold for the assembly of a functional preinitiation complex with RNA polymerase II and the general transcription factors. The sequence is that of Mediator of RNA polymerase II transcription subunit 19 (ROX3) from Kluyveromyces lactis (strain ATCC 8585 / CBS 2359 / DSM 70799 / NBRC 1267 / NRRL Y-1140 / WM37) (Yeast).